Here is a 99-residue protein sequence, read N- to C-terminus: A-type ATP synthase subunit F (99 aa).

It belongs to the V-ATPase F subunit family. Has multiple subunits with at least A(3), B(3), C, D, E, F, H, I and proteolipid K(x).

It localises to the cell membrane. In terms of biological role, component of the A-type ATP synthase that produces ATP from ADP in the presence of a proton gradient across the membrane. In Methanococcus aeolicus (strain ATCC BAA-1280 / DSM 17508 / OCM 812 / Nankai-3), this protein is A-type ATP synthase subunit F.